The primary structure comprises 275 residues: MAQKPVADALTLELEPVVEANMTRHLDTEDIWFAHDYVPFDQGENFAFLGGRDWDPSQSTLPRTITDACEILLILKDNLAGHHRELVEHFILEDWWGRWLGRWTAEEHLHAIALREYLVVTREVDPVANEDVRVQHVMKGYRAEKYTQVETLVYMAFYERCGAVFCRNLAAQIEEPILAGLIDRIARDEVRHEEFFANLVTHCLDYTRDETIAAIAARAADLDVLGADIEAYRDKLQNVADAGIFGKPQLRQLISDRITAWGLAGEPSLKQFVTG.

Glutamate 107, histidine 110, glutamate 159, glutamate 189, and histidine 192 together coordinate Fe cation.

Belongs to the fatty acid desaturase type 2 family. Homodimer. It depends on Fe(2+) as a cofactor.

It functions in the pathway lipid metabolism; fatty acid metabolism. Functionally, may be a desaturase involved in mycobacterial fatty acid biosynthesis. The sequence is that of Putative acyl-[acyl-carrier-protein] desaturase DesA2 (desA2) from Mycobacterium tuberculosis (strain CDC 1551 / Oshkosh).